The following is a 117-amino-acid chain: Large ribosomal subunit protein bL20 (117 aa).

This sequence belongs to the bacterial ribosomal protein bL20 family.

Functionally, binds directly to 23S ribosomal RNA and is necessary for the in vitro assembly process of the 50S ribosomal subunit. It is not involved in the protein synthesizing functions of that subunit. In Thermomicrobium roseum (strain ATCC 27502 / DSM 5159 / P-2), this protein is Large ribosomal subunit protein bL20.